The sequence spans 446 residues: Mitochondrial ribonuclease P protein 1 homolog (446 aa).

Residues 1 to 24 constitute a mitochondrion transit peptide; that stretch reads MLKHFARWRLGSQLLKGCAAPVRQ. A disordered region spans residues 41-67; it reads PQKKFVNPFSQPAPALSNDTISENKEE. Phosphoserine occurs at positions 50 and 57. Thr-60 is subject to Phosphothreonine. Ser-62 is modified (phosphoserine). The stretch at 119–158 forms a coiled coil; that stretch reads LWQIEMKKEADQRKKAERAKEAERRVAEMRKEREENTHII. The SAM-dependent MTase TRM10-type domain maps to 179-373; that stretch reads QNNRLTRAMQ…KHVPRRKVVQ (195 aa).

The protein belongs to the class IV-like SAM-binding methyltransferase superfamily. TRM10 family. In terms of assembly, component of mitochondrial ribonuclease P, a complex composed of rswl/MRPP1, scu/MRPP2 and mldr/MRPP3.

The protein resides in the mitochondrion. In terms of biological role, mitochondrial tRNA N1-methyltransferase involved in mitochondrial tRNA maturation. Component of mitochondrial ribonuclease P, a complex composed of rswl/MRPP1, scu/MRPP2 and mldr/MRPP3., which cleaves tRNA molecules in their 5'-ends. Essential for the structural and functional integrity of mitochondria. Function is essential for pupal development. This is Mitochondrial ribonuclease P protein 1 homolog from Drosophila melanogaster (Fruit fly).